Here is a 302-residue protein sequence, read N- to C-terminus: NAD kinase 2 (302 aa).

Asp78 acts as the Proton acceptor in catalysis. NAD(+) contacts are provided by residues 78–79 (DG), 152–153 (NE), Asp182, 193–198 (TAYSLS), and Ala217.

It belongs to the NAD kinase family. A divalent metal cation serves as cofactor.

Its subcellular location is the cytoplasm. It carries out the reaction NAD(+) + ATP = ADP + NADP(+) + H(+). Involved in the regulation of the intracellular balance of NAD and NADP, and is a key enzyme in the biosynthesis of NADP. Catalyzes specifically the phosphorylation on 2'-hydroxyl of the adenosine moiety of NAD to yield NADP. The sequence is that of NAD kinase 2 from Prochlorococcus marinus (strain SARG / CCMP1375 / SS120).